The following is a 188-amino-acid chain: Photosystem I assembly protein Ycf4 (188 aa).

2 helical membrane-spanning segments follow: residues 28–48 (WATVITIGGTGFFLAGLSSYL) and 68–88 (IAIGFYGVAALLLAIYLWATI).

It belongs to the Ycf4 family.

The protein resides in the cellular thylakoid membrane. Functionally, seems to be required for the assembly of the photosystem I complex. This is Photosystem I assembly protein Ycf4 from Cyanothece sp. (strain PCC 7425 / ATCC 29141).